Consider the following 1480-residue polypeptide: Cystic fibrosis transmembrane conductance regulator (1480 aa).

Over 1–77 the chain is Cytoplasmic; it reads MQRSPLEKAS…KLINALRRCF (77 aa). Residues 78–98 traverse the membrane as a helical segment; that stretch reads FWRFMFYGILLYLGEVTKAVQ. Residues 81–365 enclose the ABC transmembrane type-1 1 domain; sequence FMFYGILLYL…WAVQTWYDSL (285 aa). Topologically, residues 99–122 are extracellular; sequence PLLLGRIIASYDPDNKTERSIAIY. The helical transmembrane segment at 123-146 threads the bilayer; sequence LGIGLCLLFIVRTLLLHPAIFGLH. Over 147–195 the chain is Cytoplasmic; the sequence is HIGMQMRIAMFSLIYKKTLKLSSRVLDKISIGQLVSLLSNNLNKFDEGL. A helical membrane pass occupies residues 196–216; it reads ALAHFVWIAPLQVALLMGLIW. The Extracellular portion of the chain corresponds to 217–222; that stretch reads ELLQAS. A helical transmembrane segment spans residues 223-243; it reads VFCGLGFLIVLALFQAGLGRM. At 244-298 the chain is on the cytoplasmic side; it reads MMKYRDQRAGKINERLVITSEMIENIQSVKAYCWEEAMEKMIENLRQTELKLTRK. Residues 299-319 form a helical membrane-spanning segment; the sequence is AAYVRYFNSSAFFFSGFFVVF. The Extracellular portion of the chain corresponds to 320-339; sequence LSVLPYALIKGIILRKIFTT. The chain crosses the membrane as a helical span at residues 340-358; that stretch reads ISFCIVLRMAVTRQFPWAV. Over 359 to 858 the chain is Cytoplasmic; sequence QTWYDSLGAI…YLRYITLHKS (500 aa). Residues Trp-401, Ser-434, 458–465, and Gln-493 contribute to the ATP site; that span reads GSTGAGKT. In terms of domain architecture, ABC transporter 1 spans 423-646; it reads NGHDNLFFSN…RPDFSSKLMG (224 aa). Cys-524 carries the S-palmitoyl cysteine lipid modification. 2 positions are modified to phosphoserine: Ser-549 and Ser-660. A disordered R region region spans residues 654–831; the sequence is SSERRNSILT…EEINEEDLKE (178 aa). Ser-670 carries the post-translational modification Phosphoserine; by PKA. Ser-686 is subject to Phosphoserine. Residue Lys-688 forms a Glycyl lysine isopeptide (Lys-Gly) (interchain with G-Cter in ubiquitin) linkage. Phosphoserine is present on residues Ser-700 and Ser-712. Position 717 is a phosphothreonine (Thr-717). Ser-737, Ser-753, Ser-768, Ser-790, Ser-795, and Ser-813 each carry phosphoserine. A helical membrane pass occupies residues 859-879; that stretch reads LIFVLIWCLVIFLAEVAASLV. The ABC transmembrane type-1 2 domain occupies 859–1155; sequence LIFVLIWCLV…AVNSSIDVDS (297 aa). Residues 880 to 918 are Extracellular-facing; the sequence is VLWLLGNTSFQDKGNSTYSRNNSYAVIITNTSSYYVFYI. 3 N-linked (GlcNAc...) asparagine glycosylation sites follow: Asn-894, Asn-900, and Asn-909. Residues 919 to 939 traverse the membrane as a discontinuously helical segment; that stretch reads YVGVADTLLALGFFRGLPLVH. The Cytoplasmic portion of the chain corresponds to 940–990; the sequence is TLITVSKILHHKMLHSVLQAPMSTLNTLKAGGILNRFSKDIAILDDLLPLT. Residues 991–1011 form a helical membrane-spanning segment; the sequence is IFDFIQLLLIVIGAIAVVSVL. Residues 1012-1013 lie on the Extracellular side of the membrane; the sequence is QP. A helical transmembrane segment spans residues 1014–1034; it reads YIFLATVPVIAAFILLRAYFL. Residues 1035–1095 are Cytoplasmic-facing; that stretch reads QTSQQLKQLE…TANWFLYLST (61 aa). The chain crosses the membrane as a helical span at residues 1096 to 1116; it reads LRWFQMRIEMIFVIFFIAVTF. Over 1117 to 1130 the chain is Extracellular; it reads ISILTTGEGEGTVG. The chain crosses the membrane as a helical span at residues 1131-1151; sequence IILTLAMNIMSTLQWAVNSSI. Residues 1152–1480 are Cytoplasmic-facing; the sequence is DVDSLMRSVS…TEEEVQETRL (329 aa). The 234-residue stretch at 1210–1443 folds into the ABC transporter 2 domain; that stretch reads MTIKDLTAKY…KSLFQQAISH (234 aa). Residues Tyr-1219 and 1244-1251 contribute to the ATP site; that span reads GRTGSGKS. Residues 1386 to 1480 are interaction with GORASP2; sequence RALKQAFADC…TEEEVQETRL (95 aa). Cys-1395 carries S-palmitoyl cysteine lipidation. Phosphoserine occurs at positions 1444 and 1456. The disordered stretch occupies residues 1452 to 1480; it reads HRNSSKYKSRPQIASLKEETEEEVQETRL. Positions 1470-1480 are enriched in acidic residues; that stretch reads ETEEEVQETRL. Residues 1478 to 1480 carry the PDZ-binding motif; it reads TRL.

It belongs to the ABC transporter superfamily. ABCC family. CFTR transporter (TC 3.A.1.202) subfamily. As to quaternary structure, monomer; does not require oligomerization for channel activity. May form oligomers in the membrane. Interacts with SLC26A3, SLC26A6 and NHERF1. Interacts with SHANK2. Interacts with MYO6. Interacts (via C-terminus) with GOPC (via PDZ domain); this promotes CFTR internalization and thereby decreases channel activity. Interacts with SLC4A7 through NHERF1. Found in a complex with MYO5B and RAB11A. Interacts with ANO1. Interacts with SLC26A8. Interacts with AHCYL1; the interaction increases CFTR activity. Interacts with CSE1L. The core-glycosylated form interacts with GORASP2 (via PDZ GRASP-type 1 domain) in respone to ER stress. Interacts with MARCHF2; the interaction leads to CFTR ubiqtuitination and degradation. Interacts with ADGRG2. N-glycosylated. In terms of processing, phosphorylated; cAMP treatment promotes phosphorylation and activates the channel. Dephosphorylation decreases the ATPase activity (in vitro). Phosphorylation at PKA sites activates the channel. Phosphorylation at PKC sites enhances the response to phosphorylation by PKA. Phosphorylated by AMPK; this inhibits channel activity. Post-translationally, ubiquitinated, leading to its degradation in the lysosome. Deubiquitination by USP10 in early endosomes enhances its endocytic recycling to the cell membrane. Ubiquitinated by RNF185 during ER stress. Ubiquitinated by MARCHF2.

The protein resides in the apical cell membrane. It is found in the early endosome membrane. The protein localises to the cell membrane. It localises to the recycling endosome membrane. Its subcellular location is the endoplasmic reticulum membrane. The protein resides in the nucleus. The catalysed reaction is ATP + H2O + closed Cl(-) channel = ADP + phosphate + open Cl(-) channel.. The enzyme catalyses chloride(in) = chloride(out). It carries out the reaction hydrogencarbonate(in) = hydrogencarbonate(out). It catalyses the reaction ATP + H2O = ADP + phosphate + H(+). Functionally, epithelial ion channel that plays an important role in the regulation of epithelial ion and water transport and fluid homeostasis. Mediates the transport of chloride ions across the cell membrane. Possesses an intrinsic ATPase activity and utilizes ATP to gate its channel; the passive flow of anions through the channel is gated by cycles of ATP binding and hydrolysis by the ATP-binding domains. The ion channel is also permeable to HCO(3)(-); selectivity depends on the extracellular chloride concentration. Exerts its function also by modulating the activity of other ion channels and transporters. Contributes to the regulation of the pH and the ion content of the epithelial fluid layer. Modulates the activity of the epithelial sodium channel (ENaC) complex, in part by regulating the cell surface expression of the ENaC complex. May regulate bicarbonate secretion and salvage in epithelial cells by regulating the transporter SLC4A7. Can inhibit the chloride channel activity of ANO1. Plays a role in the chloride and bicarbonate homeostasis during sperm epididymal maturation and capacitation. In Plecturocebus moloch (Dusky titi monkey), this protein is Cystic fibrosis transmembrane conductance regulator.